The following is a 674-amino-acid chain: MASKLTTTSQHILENLGGPDNITSMTHCATRLRFQVKDQSIVDQQEIDSDPSVLGVVPQGSTGMQVVMGGSVANYYQEILKLDGMKHFADGEATESSSKKEYGGVRGKYSGIDYAFEFLSDTFRPILWALLGASLIITLLVLADTFGLQDFRAPMDEQPDTYVFLHSMWRSVFYFLPIMVGATAARKLGANEWIGAAIPAALLTPEFLALGSAGDTVTVFGLPMVLNDYSGQVFPPLIAAIGLYWVEKALKKIIPEAVQMVFVPFFSLLIMIPATAFLLGPFGIGVGNGISSLLEAVNNFSPFILSIVIPLLYPFLVPLGLHWPLNAIMIQNLNTLGYDFIQGPMGAWNFACFGLVTGVFLIALKEKNRAMRQVSLGGMLAGLLGGISEPSLYGVLLRFKKTYFRLLPGCLVGGIVMGIFDIKAYAFVFTSLLTIPAMDPWLGYTVGIAAAFFTSMLLVLFFDYRSDAERDEAKAQMAAAEQTNNTPAAPAAPVAPAAGAAAAGGAAGATAVATKPRLAAGQLVEITSPLEGHAVPLSEVPDPIFAAGKLGPGIAIEPTGNTVVAPADATVILVQKSGHAVALRLESGVELLIHIGLDTVQLGGEGFKVHVERKQQVKAGDPLITFDPEFIRSKNLPLITPVVVSNANKFGEIVGIEAAQADATTTVIKVNGAE.

One can recognise a PTS EIIB type-1 domain in the interval 1 to 89; it reads MASKLTTTSQ…LKLDGMKHFA (89 aa). Cysteine 28 serves as the catalytic Phosphocysteine intermediate; for EIIB activity. The PTS EIIC type-1 domain maps to 117 to 476; the sequence is EFLSDTFRPI…DAERDEAKAQ (360 aa). 10 consecutive transmembrane segments (helical) span residues 126-146, 162-182, 193-213, 225-245, 260-280, 303-323, 344-364, 376-396, 409-429, and 442-462; these read ILWA…ADTF, YVFL…MVGA, WIGA…LGSA, VLND…GLYW, MVFV…FLLG, FILS…GLHW, PMGA…LIAL, LGGM…YGVL, GCLV…AFVF, and LGYT…VLFF. The PTS EIIA type-1 domain maps to 542–646; the sequence is DPIFAAGKLG…PLITPVVVSN (105 aa). The active-site Tele-phosphohistidine intermediate; for EIIA activity is the histidine 594.

It is found in the cell membrane. It catalyses the reaction N(pros)-phospho-L-histidyl-[protein] + D-glucose(out) = D-glucose 6-phosphate(in) + L-histidyl-[protein]. In terms of biological role, the phosphoenolpyruvate-dependent sugar phosphotransferase system (sugar PTS), a major carbohydrate active transport system, catalyzes the phosphorylation of incoming sugar substrates concomitantly with their translocation across the cell membrane. This system is involved in glucose transport. The sequence is that of PTS system glucose-specific EIIBCA component (ptsG) from Corynebacterium glutamicum (Brevibacterium saccharolyticum).